The sequence spans 310 residues: GTPase Era (310 aa).

The 168-residue stretch at 17–184 folds into the Era-type G domain; that stretch reads HSGFVALIGA…LDYLAQALPA (168 aa). A G1 region spans residues 25–32; sequence GAPNAGKS. 25 to 32 contributes to the GTP binding site; it reads GAPNAGKS. Residues 51–55 are G2; that stretch reads QTTRA. Positions 72-75 are G3; sequence DTPG. GTP-binding positions include 72–76 and 134–137; these read DTPGI and NKVD. Positions 134–137 are G4; that stretch reads NKVD. The interval 163–165 is G5; it reads VSA. The region spanning 215–292 is the KH type-2 domain; that stretch reads LHQELPYSSH…HLFLFVKVRE (78 aa).

The protein belongs to the TRAFAC class TrmE-Era-EngA-EngB-Septin-like GTPase superfamily. Era GTPase family. In terms of assembly, monomer.

It is found in the cytoplasm. The protein localises to the cell inner membrane. An essential GTPase that binds both GDP and GTP, with rapid nucleotide exchange. Plays a role in 16S rRNA processing and 30S ribosomal subunit biogenesis and possibly also in cell cycle regulation and energy metabolism. This chain is GTPase Era, found in Mesorhizobium japonicum (strain LMG 29417 / CECT 9101 / MAFF 303099) (Mesorhizobium loti (strain MAFF 303099)).